The sequence spans 345 residues: MGDQIVVLGSGIIGLYTTYCLIYEAGCAPAKITIVAEFLPGDQSTLYTSPWAGGNFSCISPADDTTLAYDKFTYLNLFKIHKKLGGPECGLDNKPSTEYWDFYPGDEKVNSLKQYLKDFKVIPKSELPEGVEYGISYTTWNFNCPVFLQNMANFLNKRNVTIIRKHLTHISQAYLTVNTKVVFNCTGIGAADLGGVKDEKVYPTRGQVVVVRAPHIQENKMRWGKDYATYIIPRPYSNGELVLGGFLQKDNWTGNTFGFETDDIVSRTTSLLPKILDEPLHIIRVAAGLRPSRHGGPRIEAEVCEEGKLTIHNYGASGYGYQAGYGMSYEAVKLLVDNQKVKAKL.

FAD contacts are provided by S10, I13, S49, G53, and N55. (R)-lactate-binding residues include Y230 and R290. Anthranilate-binding residues include Y230 and R290. FAD contacts are provided by R290, S317, G320, Y321, and Q322. The Microbody targeting signal motif lies at 343–345; sequence AKL.

Belongs to the DAMOX/DASOX family. FAD is required as a cofactor.

Its subcellular location is the peroxisome matrix. The enzyme catalyses a D-alpha-amino acid + O2 + H2O = a 2-oxocarboxylate + H2O2 + NH4(+). The catalysed reaction is D-methionine + O2 + H2O = 4-methylsulfanyl-2-oxobutanoate + H2O2 + NH4(+). Catalyzes the oxidative deamination of D-amino acids with broad substrate specificity. Enables the organism to utilize D-amino acids as a source of nutrients. Enables the organism to utilize D-alanine as a nitrogen source, although it is not strictly required for this process. Also enables utilization of D-alanine as a carbon source. This Candida boidinii (Yeast) protein is D-amino-acid oxidase.